Reading from the N-terminus, the 230-residue chain is Urease accessory protein UreF (230 aa).

The protein belongs to the UreF family. As to quaternary structure, ureD, UreF and UreG form a complex that acts as a GTP-hydrolysis-dependent molecular chaperone, activating the urease apoprotein by helping to assemble the nickel containing metallocenter of UreC. The UreE protein probably delivers the nickel.

The protein resides in the cytoplasm. Its function is as follows. Required for maturation of urease via the functional incorporation of the urease nickel metallocenter. This Cupriavidus pinatubonensis (strain JMP 134 / LMG 1197) (Cupriavidus necator (strain JMP 134)) protein is Urease accessory protein UreF.